Consider the following 451-residue polypeptide: Chromosomal replication initiator protein DnaA (451 aa).

A domain I, interacts with DnaA modulators region spans residues 1-94 (MKPDLSSLWQ…KPEPKPAQPS (94 aa)). A disordered region spans residues 87–106 (EPKPAQPSALPTHHNKEENK). Positions 95–113 (ALPTHHNKEENKPQTVIRS) are domain II. The interval 114-331 (YLNPKHVFEN…GALNRVSANA (218 aa)) is domain III, AAA+ region. ATP-binding residues include glycine 159, glycine 161, lysine 162, and threonine 163. The interval 332–451 (EFMGAAITID…WSNLIRTLSV (120 aa)) is domain IV, binds dsDNA.

The protein belongs to the DnaA family. In terms of assembly, oligomerizes as a right-handed, spiral filament on DNA at oriC.

The protein resides in the cytoplasm. Its function is as follows. Plays an essential role in the initiation and regulation of chromosomal replication. ATP-DnaA binds to the origin of replication (oriC) to initiate formation of the DNA replication initiation complex once per cell cycle. Binds the DnaA box (a 9 base pair repeat at the origin) and separates the double-stranded (ds)DNA. Forms a right-handed helical filament on oriC DNA; dsDNA binds to the exterior of the filament while single-stranded (ss)DNA is stabiized in the filament's interior. The ATP-DnaA-oriC complex binds and stabilizes one strand of the AT-rich DNA unwinding element (DUE), permitting loading of DNA polymerase. After initiation quickly degrades to an ADP-DnaA complex that is not apt for DNA replication. Binds acidic phospholipids. The polypeptide is Chromosomal replication initiator protein DnaA (Pasteurella multocida (strain Pm70)).